Here is a 407-residue protein sequence, read N- to C-terminus: MVKETKLYEVLNVDVTASQAELKKAYRKLALKYHPDKNPNAGDKFKEISRAYEILADEEKRATYDRFGEEGLQGGGADGGMSADDLFASFFGGGMFGGGMPRGPRKGKDLVHTIKVTLEDLYRGKTTKLALQKKVICPKCSGRGGKEGSVKSCASCNGSGVKFITRAMGPMIQRMQMTCPDCNGAGETIRDEDRCKECDGAKVISQRKILTVHVEKGMHNGQKIVFKEEGEQAPGIIPGDVIFVIDQKEHPRFKRSGDHLFYEAHVDLLTALAGGQIVVEHLDDRWLTIPIIPGECIRPNELKVLPGQGMLSQRHHQPGNLYIRFHVDFPEPNFATPEQLALLEKALPPRKIESAPKNAHTEECVLATVDPTEKVRIDNNVDPTTATSMDEDEDEEGGHPGVQCAQQ.

In terms of domain architecture, J spans 6 to 68 (KLYEVLNVDV…EKRATYDRFG (63 aa)). Substrate-binding positions include L110 and 129 to 131 (LAL). Residues 124 to 207 (GKTTKLALQK…CDGAKVISQR (84 aa)) form a CR-type zinc finger. Residues C137, C140, C153, C156, C179, C182, C195, and C198 each coordinate Zn(2+). CXXCXGXG motif repeat units follow at residues 137-144 (CPKCSGRG), 153-160 (CASCNGSG), 179-186 (CPDCNGAG), and 195-202 (CKECDGAK). Residues 209–210 (IL) and 241–243 (VIF) contribute to the substrate site. Positions 375-407 (VRIDNNVDPTTATSMDEDEDEEGGHPGVQCAQQ) are disordered. A Cysteine methyl ester modification is found at C404. C404 carries S-farnesyl cysteine lipidation. Residues 405–407 (AQQ) constitute a propeptide, removed in mature form.

Homodimer.

The protein resides in the cytoplasm. It localises to the nucleus. Probably involved in mitochondrial protein import. Plays a role in microtubule cytoskeleton organization. This chain is Mitochondrial protein import protein mas5 (mas5), found in Schizosaccharomyces pombe (strain 972 / ATCC 24843) (Fission yeast).